Reading from the N-terminus, the 98-residue chain is NADH-ubiquinone oxidoreductase chain 4L (98 aa).

A run of 3 helical transmembrane segments spans residues M1–M21, S29–L49, and I61–I81.

Belongs to the complex I subunit 4L family. In terms of assembly, core subunit of respiratory chain NADH dehydrogenase (Complex I) which is composed of 45 different subunits.

It localises to the mitochondrion inner membrane. The catalysed reaction is a ubiquinone + NADH + 5 H(+)(in) = a ubiquinol + NAD(+) + 4 H(+)(out). Its function is as follows. Core subunit of the mitochondrial membrane respiratory chain NADH dehydrogenase (Complex I) which catalyzes electron transfer from NADH through the respiratory chain, using ubiquinone as an electron acceptor. Part of the enzyme membrane arm which is embedded in the lipid bilayer and involved in proton translocation. The protein is NADH-ubiquinone oxidoreductase chain 4L (MT-ND4L) of Galeopterus variegatus (Malayan flying lemur).